A 1104-amino-acid chain; its full sequence is Extended synaptotagmin-1 (1104 aa).

At M1 the chain carries N-acetylmethionine. Over 1-38 (MERSPGEGPSPSPMDQPSAPSDPTDQPPAAHAKPDPGS) the chain is Cytoplasmic. The interval 1-48 (MERSPGEGPSPSPMDQPSAPSDPTDQPPAAHAKPDPGSGGQPAGPGAA) is disordered. Over residues 37–47 (GSGGQPAGPGA) the composition is skewed to gly residues. A helical transmembrane segment spans residues 39 to 59 (GGQPAGPGAAGEALAVLTSFG). The Lumenal segment spans residues 60–62 (RRL). The chain crosses the membrane as a helical span at residues 63–83 (LVLIPVYLAGAVGLSVGFVLF). Topologically, residues 84 to 1104 (GLALYLGWRR…LMDNKDKGSS (1021 aa)) are cytoplasmic. Positions 91 to 116 (WRRVRDEKERSLRAARQLLDDEEQLT) form a coiled coil. One can recognise an SMP-LTD domain in the interval 135–313 (DVEKAEWLNK…LPNRLLVPLV (179 aa)). 4 consecutive C2 domains span residues 312-433 (LVPD…DDWF), 460-580 (QVLQ…QLSS), 627-751 (SVDA…DEWL), and 777-899 (LEEV…TLSS). Phosphoserine; by CDK5 is present on S324. Ca(2+) is bound by residues K344, D345, D357, D404, D406, D408, D410, and D411. The segment at 617 to 641 (VDSENPQRGSSVDAPPRPCHTTPDS) is disordered. Position 817 is an N6-acetyllysine (K817). S820 and S941 each carry phosphoserine. The disordered stretch occupies residues 924–950 (SHSYSHSSSSLSEEPELSGGPPHITSS). The segment covering 925–946 (HSYSHSSSSLSEEPELSGGPPH) has biased composition (low complexity). Residue T948 is modified to Phosphothreonine. 2 positions are modified to phosphoserine: S949 and S963. The C2 5 domain maps to 971–1093 (PLGQVKLTLW…DLSQGVARWY (123 aa)). Position 1009 is a phosphotyrosine (Y1009). A required for phosphatidylinositol 4,5-bisphosphate-dependent location at the cell membrane region spans residues 1018–1025 (KNRGTKRR). The residue at position 1034 (S1034) is a Phosphoserine.

It belongs to the extended synaptotagmin family. As to quaternary structure, interacts with ESYT2 and ESYT3. Interacts with ADGRD1; inhibiting the G-protein-coupled receptor activity of ADGRD1. Interaction with ADGRD1 is abolished when cytosolic calcium increases, relieving ADGRD1 G-protein-coupled receptor activity. Interacts (phosphorylated form) with SLC2A4. In terms of processing, phosphorylated on Ser residues in insulin-treated adipocytes (in vitro); this promotes interaction with SLC2A4. As to expression, widely expressed.

It localises to the endoplasmic reticulum membrane. The protein localises to the cell membrane. In terms of biological role, binds calcium (via the C2 domains) and translocates to sites of contact between the endoplasmic reticulum and the cell membrane in response to increased cytosolic calcium levels. Helps tether the endoplasmic reticulum to the cell membrane and promotes the formation of appositions between the endoplasmic reticulum and the cell membrane. Acts as an inhibitor of ADGRD1 G-protein-coupled receptor activity in absence of cytosolic calcium. Binds glycerophospholipids in a barrel-like domain and may play a role in cellular lipid transport. The chain is Extended synaptotagmin-1 from Homo sapiens (Human).